Reading from the N-terminus, the 386-residue chain is Homoserine O-succinyltransferase (386 aa).

The AB hydrolase-1 domain maps to 49-358 (NAILICHALS…DAEQGHDSFL (310 aa)). Ser-156 (nucleophile) is an active-site residue. Arg-226 is a binding site for substrate. Catalysis depends on residues Asp-321 and His-354. Asp-355 serves as a coordination point for substrate.

It belongs to the AB hydrolase superfamily. MetX family. Homodimer.

The protein resides in the cytoplasm. It catalyses the reaction L-homoserine + succinyl-CoA = O-succinyl-L-homoserine + CoA. It functions in the pathway amino-acid biosynthesis; L-methionine biosynthesis via de novo pathway; O-succinyl-L-homoserine from L-homoserine: step 1/1. Transfers a succinyl group from succinyl-CoA to L-homoserine, forming succinyl-L-homoserine. The protein is Homoserine O-succinyltransferase of Acinetobacter baumannii (strain ACICU).